The chain runs to 265 residues: Mlc titration factor A (265 aa).

Residues histidine 111, histidine 148, histidine 152, and glutamate 211 each coordinate Zn(2+).

The protein belongs to the MtfA family. Interacts with Mlc. The cofactor is Zn(2+).

The protein localises to the cytoplasm. Its function is as follows. Involved in the modulation of the activity of the glucose-phosphotransferase system (glucose-PTS). Interacts with the transcriptional repressor Mlc, preventing its interaction with DNA and leading to the modulation of expression of genes regulated by Mlc, including ptsG, which encodes the PTS system glucose-specific EIICB component. In terms of biological role, shows zinc-dependent metallopeptidase activity. This chain is Mlc titration factor A, found in Salmonella choleraesuis (strain SC-B67).